The chain runs to 854 residues: DNA mismatch repair protein MutS (854 aa).

616–623 (GPNMGGKS) is an ATP binding site.

Belongs to the DNA mismatch repair MutS family.

Functionally, this protein is involved in the repair of mismatches in DNA. It is possible that it carries out the mismatch recognition step. This protein has a weak ATPase activity. The sequence is that of DNA mismatch repair protein MutS from Pectobacterium atrosepticum (strain SCRI 1043 / ATCC BAA-672) (Erwinia carotovora subsp. atroseptica).